The primary structure comprises 364 residues: Dual-specificity RNA methyltransferase RlmN (364 aa).

The active-site Proton acceptor is glutamate 91. One can recognise a Radical SAM core domain in the interval 97–333; that stretch reads EDDRGTLCVS…VTVRKTRGDD (237 aa). Residues cysteine 104 and cysteine 338 are joined by a disulfide bond. 3 residues coordinate [4Fe-4S] cluster: cysteine 111, cysteine 115, and cysteine 118. Residues 164-165, serine 196, 218-220, and asparagine 295 each bind S-adenosyl-L-methionine; these read GE and SLH. Cysteine 338 functions as the S-methylcysteine intermediate in the catalytic mechanism.

Belongs to the radical SAM superfamily. RlmN family. The cofactor is [4Fe-4S] cluster.

The protein localises to the cytoplasm. The enzyme catalyses adenosine(2503) in 23S rRNA + 2 reduced [2Fe-2S]-[ferredoxin] + 2 S-adenosyl-L-methionine = 2-methyladenosine(2503) in 23S rRNA + 5'-deoxyadenosine + L-methionine + 2 oxidized [2Fe-2S]-[ferredoxin] + S-adenosyl-L-homocysteine. It carries out the reaction adenosine(37) in tRNA + 2 reduced [2Fe-2S]-[ferredoxin] + 2 S-adenosyl-L-methionine = 2-methyladenosine(37) in tRNA + 5'-deoxyadenosine + L-methionine + 2 oxidized [2Fe-2S]-[ferredoxin] + S-adenosyl-L-homocysteine. Functionally, specifically methylates position 2 of adenine 2503 in 23S rRNA and position 2 of adenine 37 in tRNAs. m2A2503 modification seems to play a crucial role in the proofreading step occurring at the peptidyl transferase center and thus would serve to optimize ribosomal fidelity. This is Dual-specificity RNA methyltransferase RlmN from Chromobacterium violaceum (strain ATCC 12472 / DSM 30191 / JCM 1249 / CCUG 213 / NBRC 12614 / NCIMB 9131 / NCTC 9757 / MK).